The chain runs to 112 residues: Small ribosomal subunit protein uS17 (112 aa).

It belongs to the universal ribosomal protein uS17 family. In terms of assembly, part of the 30S ribosomal subunit.

Functionally, one of the primary rRNA binding proteins, it binds specifically to the 5'-end of 16S ribosomal RNA. This Haloarcula marismortui (strain ATCC 43049 / DSM 3752 / JCM 8966 / VKM B-1809) (Halobacterium marismortui) protein is Small ribosomal subunit protein uS17.